The primary structure comprises 214 residues: Charged multivesicular body protein 2b (214 aa).

Residues 25–55 (QRQIARDRTALEKQEKQLEMEIKKMAKTGNR) are a coiled coil. The tract at residues 178 to 199 (MAHAPSAARKTPSAATAKADGI) is disordered. The MIT-interacting motif motif lies at 202 to 212 (EDIERQLKALG).

The protein belongs to the SNF7 family. As to quaternary structure, probable core component of the endosomal sorting required for transport complex III (ESCRT-III). ESCRT-III components are thought to multimerize to form a flat lattice on the perimeter membrane of the endosome.

Its subcellular location is the cytoplasm. The protein localises to the cytosol. It is found in the late endosome membrane. In terms of biological role, probable core component of the endosomal sorting required for transport complex III (ESCRT-III) which is involved in multivesicular bodies (MVBs) formation and sorting of endosomal cargo proteins into MVBs. MVBs contain intraluminal vesicles (ILVs) that are generated by invagination and scission from the limiting membrane of the endosome and mostly are delivered to lysosomes enabling degradation of membrane proteins, such as stimulated growth factor receptors, lysosomal enzymes and lipids. In Danio rerio (Zebrafish), this protein is Charged multivesicular body protein 2b (chmp2b).